A 266-amino-acid polypeptide reads, in one-letter code: Non-structural maintenance of chromosomes element 1 homolog (266 aa).

The interaction with NSMCE3 stretch occupies residues 1-102 (MQGSTRRMGV…SISKMATDFA (102 aa)). Residues 191 to 232 (CNICHSLLIQGQSCETCGIRMHLPCVAKYFQSNAEPRCPHCN) form an RING-type; atypical zinc finger. Positions 246–266 (EKERESGVLKSNKKSLRSRQH) are disordered. A Phosphoserine modification is found at Ser251. Residues 256 to 266 (SNKKSLRSRQH) show a composition bias toward basic residues.

It belongs to the NSE1 family. As to quaternary structure, component of the SMC5-SMC6 complex which consists at least of SMC5, SMC6, NSMCE2, NSMCE1, NSMCE4A or EID3 and NSMCE3. NSMCE1, NSMCE4A or EID3 and NSMCE3 probably form a subcomplex that bridges the head domains of the SMC5-SMC6 heterodimer. Interacts with NSMCE3. Interacts with MAGEF1. In terms of processing, ubiquitinated.

It localises to the nucleus. It is found in the chromosome. The protein resides in the telomere. The catalysed reaction is S-ubiquitinyl-[E2 ubiquitin-conjugating enzyme]-L-cysteine + [acceptor protein]-L-lysine = [E2 ubiquitin-conjugating enzyme]-L-cysteine + N(6)-ubiquitinyl-[acceptor protein]-L-lysine.. RING-type zinc finger-containing E3 ubiquitin ligase that assembles with melanoma antigen protein (MAGE) to catalyze the direct transfer of ubiquitin from E2 ubiquitin-conjugating enzyme to a specific substrate. Within MAGE-RING ubiquitin ligase complex, MAGE stimulates and specifies ubiquitin ligase activity likely through recruitment and/or stabilization of the E2 ubiquitin-conjugating enzyme at the E3:substrate complex. Involved in maintenance of genome integrity, DNA damage response and DNA repair. NSMCE3/MAGEG1 and NSMCE1 ubiquitin ligase are components of SMC5-SMC6 complex and may positively regulate homologous recombination-mediated DNA repair. MAGEF1-NSMCE1 ubiquitin ligase promotes proteasomal degradation of MMS19, a key component of the cytosolic iron-sulfur protein assembly (CIA) machinery. Down-regulation of MMS19 impairs the activity of several DNA repair and metabolism enzymes such as ERCC2/XPD, FANCJ, RTEL1 and POLD1 that require iron-sulfur clusters as cofactors. This chain is Non-structural maintenance of chromosomes element 1 homolog, found in Homo sapiens (Human).